Consider the following 174-residue polypeptide: ATP-dependent protease subunit HslV (174 aa).

The active site involves Thr-2. Na(+) contacts are provided by Gly-157, Cys-160, and Thr-163.

This sequence belongs to the peptidase T1B family. HslV subfamily. As to quaternary structure, a double ring-shaped homohexamer of HslV is capped on each side by a ring-shaped HslU homohexamer. The assembly of the HslU/HslV complex is dependent on binding of ATP.

It localises to the cytoplasm. It catalyses the reaction ATP-dependent cleavage of peptide bonds with broad specificity.. Allosterically activated by HslU binding. Protease subunit of a proteasome-like degradation complex believed to be a general protein degrading machinery. The chain is ATP-dependent protease subunit HslV from Shewanella loihica (strain ATCC BAA-1088 / PV-4).